We begin with the raw amino-acid sequence, 528 residues long: Probable serine/threonine-protein kinase DDB_G0282417 (528 aa).

The span at 49-77 (NNNNNNNNNNNNNNNNNNNNNNNNNNKNN) shows a compositional bias: low complexity. The segment at 49-84 (NNNNNNNNNNNNNNNNNNNNNNNNNNKNNNDGDDAA) is disordered. A Protein kinase domain is found at 136–466 (QQNRVLIGEG…ESLINNHQYS (331 aa)). Residues 142–150 (IGEGHYGKV) and Lys-166 contribute to the ATP site. Asp-266 functions as the Proton acceptor in the catalytic mechanism.

It belongs to the protein kinase superfamily. Ser/Thr protein kinase family.

It carries out the reaction L-seryl-[protein] + ATP = O-phospho-L-seryl-[protein] + ADP + H(+). It catalyses the reaction L-threonyl-[protein] + ATP = O-phospho-L-threonyl-[protein] + ADP + H(+). The polypeptide is Probable serine/threonine-protein kinase DDB_G0282417 (Dictyostelium discoideum (Social amoeba)).